A 78-amino-acid polypeptide reads, in one-letter code: Chondrosarcoma-associated gene 1 protein (78 aa).

The signal sequence occupies residues 1 to 19; the sequence is MSATTACWPAFTVLGEARG. The segment at 35–78 is disordered; it reads KMSRKPRASSPFSNNHPSTPKRFPRQPRREKGPVKEVPGTKGSP.

As to expression, expressed in chondrosarcoma, melanoma, cartilage and testis, but not in other normal tissues.

The protein resides in the cytoplasm. It localises to the cytoskeleton. It is found in the microtubule organizing center. Its subcellular location is the centrosome. The protein localises to the spindle pole. In terms of biological role, may play an important role in maintaining centrosome integrity during mitosis. In Homo sapiens (Human), this protein is Chondrosarcoma-associated gene 1 protein.